The following is a 503-amino-acid chain: MAYAHVFASLTISTISLRRFLPRLHRNHSVKPNSRIICNLKLNYSAGKFREMGLSRSVELDQFITSEEEEGEAEEIGEGFFEAIEELERMTREPSDILEEMNHRLSSRELQLMLVYFAQEGRDSWCTLEVFEWLKKENRVDEEIMELMVSIMCGWVKKLIEDECNAHQVFDLLIEMDCVGLKPGFSMMDKVIALYCEMGKKESAVLFVKEVLRRRDGFGYSVVGGGGSEGRKGGPVGYLAWKFMVDGDYRKAVDMVMELRLSGLKPEAYSYLIAMTAIVKELNSLGKTLRELKRFARAGFVAEIDDHDRVLIEKYQSETLSRGLQLATWAVEEGQENDSIIGVVHERLLAMYICAGRGPEAEKQLWKMKLAGREPEADLHDIVMAICASQKEVNAVSRLLTRVEFMGSQRKKKTLSWLLRGYVKGGHFEEAAETLVSMIDSGLHPEYIDRVAVMQGMTRKIQRPRDVEAYMSLCKRLFDAGLVGPCLVYMYIDKYKLWIVKMM.

The N-terminal 50 residues, Met-1 to Arg-50, are a transit peptide targeting the chloroplast. PPR repeat units follow at residues Ile-341–Pro-375, Glu-376–Arg-410, and Lys-411–Pro-445.

This sequence belongs to the PPR family. P subfamily.

Its subcellular location is the plastid. It localises to the chloroplast. In Arabidopsis thaliana (Mouse-ear cress), this protein is Pentatricopeptide repeat-containing protein At2g30100, chloroplastic.